Reading from the N-terminus, the 273-residue chain is Large ribosomal subunit protein uL2cz/uL2cy (273 aa).

2 disordered regions span residues 1-22 (MAIH…DSQV) and 223-254 (MNPV…PALG).

Belongs to the universal ribosomal protein uL2 family. As to quaternary structure, part of the 50S ribosomal subunit.

It is found in the plastid. The protein resides in the chloroplast. The chain is Large ribosomal subunit protein uL2cz/uL2cy (rpl2-A) from Drimys granadensis.